The chain runs to 200 residues: Peroxiredoxin (200 aa).

One can recognise a Thioredoxin domain in the interval 6-166; it reads ARIGHLAPGF…ILRLVQAFQF (161 aa). C52 functions as the Cysteine sulfenic acid (-SOH) intermediate in the catalytic mechanism.

Belongs to the peroxiredoxin family. AhpC/Prx1 subfamily. As to quaternary structure, homodimer; disulfide-linked, upon oxidation.

The enzyme catalyses a hydroperoxide + [thioredoxin]-dithiol = an alcohol + [thioredoxin]-disulfide + H2O. In terms of biological role, thiol-specific peroxidase that catalyzes the reduction of hydrogen peroxide and organic hydroperoxides to water and alcohols, respectively. Plays a role in cell protection against oxidative stress by detoxifying peroxides and as sensor of hydrogen peroxide-mediated signaling events. This Oncorhynchus mykiss (Rainbow trout) protein is Peroxiredoxin.